Here is a 571-residue protein sequence, read N- to C-terminus: MALDVLGRLGFFNCGSGSVVTPCSASARLSSELEPSKQRNRSWFRSPGSGGSTWAVANILCFDKDTIPESFRNGRLRSRARQKTLLEGASRSSLSSAARLWISKTAGIPSSRTGCRGSVLNGGWSGGEVAGEGRKSLLPIKRHSSCSSQSLPQQQRRTKDAGRVVCYSHRKRNLGSLLGSRVVEEPWSWILEGYVLKGLTGRRNDGPSELELGRGSYRGGPVHGANHIRPLQRPDSVHPQPLTSARPRRGTEHDELPLRRTLRNCIPHSRDTPPKRDTGIASEKDWGINLKNEKTSESGVNEDGSTWYRESGEDLGDNGYRCRWTVMGGKNADGTSEWKEAWWEKSDWTGYKELGAEKSGKNAQGDTWWETWQEILRQDDWSNLARIEKSAQKQAKSGSGTAGWYEKWWEKYNAKGWSEKGAHKYGRLNDQGWWEKWGEQYDGRGAVLKWTDKWAETDMGTKWGDKWEERFNVGIGTRQGETWHYSATGERWSRTWGEEHFGNGKVHKYGKSTSGESWDSVVEEGTFYQAEPHYGWADAVGNSGQLLSIVALERPPGIYPDLDLGMNKEQQ.

Disordered regions lie at residues 142-162 and 215-254; these read RHSS…KDAG and GSYR…TEHD. Over residues 145–155 the composition is skewed to low complexity; sequence SCSSQSLPQQQ.

This sequence belongs to the ESV1 family.

It is found in the plastid. The protein localises to the chloroplast stroma. In terms of biological role, binds preferentially to highly ordered alpha-glucans, such as starch and crystalline maltodextrins. Involved in the organization of the starch granule matrix, thus influencing starch turnover by modulating the accessibility of starch polymers to modifying and degrading enzymes. Required for the control of starch degradation in leaves and starch distribution in nonphotosynthetic parts. Promotes gravitropic responses, negative in shoots but positive in roots, by facilitating starch granules (statoliths) formation in hypocotyls and roots columella. The sequence is that of Protein EARLY STARVATION 1, chloroplastic from Marchantia polymorpha (Common liverwort).